A 596-amino-acid polypeptide reads, in one-letter code: uncharacterized protein (596 aa).

The chain crosses the membrane as a helical span at residues 7–26 (FWPILLGFTVLVAAGLYYVV).

It is found in the membrane. This is an uncharacterized protein from Sinorhizobium fredii (strain NBRC 101917 / NGR234).